Here is a 481-residue protein sequence, read N- to C-terminus: Regulator of G-protein signaling 1 (481 aa).

The disordered stretch occupies residues 1–31 (MPALHNPSSPPPSYEAVTSYRNGNSIDSGDK). The interval 33–227 (QQCSRLMKIT…SVHEIGKSKN (195 aa)) is fungal-DR. The DEP domain occupies 232–312 (PVYSVSSPSP…KGVSYFLTGK (81 aa)). An RGS domain is found at 344–474 (ILETILRKPN…AGDSLLKFLE (131 aa)).

The protein resides in the nucleus. Its subcellular location is the cytoplasm. Negatively regulates pheromone signaling during mating. Acts in a negative feedback loop that is essential for the mating process. This loop acts to down-regulate cellular sensitivity to pheromone. Activated by ste11. This chain is Regulator of G-protein signaling 1 (rgs1), found in Schizosaccharomyces pombe (strain 972 / ATCC 24843) (Fission yeast).